Here is an 88-residue protein sequence, read N- to C-terminus: Small ribosomal subunit protein uS17 (88 aa).

It belongs to the universal ribosomal protein uS17 family. In terms of assembly, part of the 30S ribosomal subunit.

One of the primary rRNA binding proteins, it binds specifically to the 5'-end of 16S ribosomal RNA. The chain is Small ribosomal subunit protein uS17 from Azotobacter vinelandii (strain DJ / ATCC BAA-1303).